The primary structure comprises 699 residues: Elongation factor G (699 aa).

The region spanning 8–288 is the tr-type G domain; that stretch reads EDYRNFGIMA…AVVDYLPSPI (281 aa). Residues 17–24, 86–90, and 140–143 each bind GTP; these read AHIDAGKT, DTPGH, and NKMD.

The protein belongs to the TRAFAC class translation factor GTPase superfamily. Classic translation factor GTPase family. EF-G/EF-2 subfamily.

It is found in the cytoplasm. Catalyzes the GTP-dependent ribosomal translocation step during translation elongation. During this step, the ribosome changes from the pre-translocational (PRE) to the post-translocational (POST) state as the newly formed A-site-bound peptidyl-tRNA and P-site-bound deacylated tRNA move to the P and E sites, respectively. Catalyzes the coordinated movement of the two tRNA molecules, the mRNA and conformational changes in the ribosome. This Sinorhizobium fredii (strain NBRC 101917 / NGR234) protein is Elongation factor G.